The chain runs to 3256 residues: Proliferation marker protein Ki-67 (3256 aa).

One can recognise an FHA domain in the interval 27–76 (CLFGRGIECDIRIQLPVVSKQHCKIEIHEQEAILHNFSSTNPTQVNGSVI). Positions 101-199 (SLQNGRKSTE…RNGRNAADPI (99 aa)) are disordered. Residues 107 to 122 (KSTEFPRKIREQEPAR) show a composition bias toward basic and acidic residues. S125, S128, and S166 each carry phosphoserine. Residues 161-173 (NVKEDSTADDSKD) are compositionally biased toward basic and acidic residues. A compositionally biased stretch (polar residues) spans 174–183 (SVAQGTTNVH). K245 is covalently cross-linked (Glycyl lysine isopeptide (Lys-Gly) (interchain with G-Cter in SUMO2)). Phosphoserine is present on residues S264, S296, and S308. Disordered stretches follow at residues 271–426 (ATEK…RGSI) and 513–542 (RPEL…LVMH). Positions 314-324 (DQNKGKGRDVE) are enriched in basic and acidic residues. T328 and T347 each carry phosphothreonine. Positions 349–358 (VQYSQQQNSP) are enriched in polar residues. Residues S352, S357, and S374 each carry the phosphoserine modification. T401 is modified (phosphothreonine). Phosphoserine is present on S411. The span at 414–425 (KPENLSSKTRGS) shows a compositional bias: polar residues. The tract at residues 495–678 (ESEGIPLKRR…AKQTQTKVIK (184 aa)) is positively charged patch (CP). The 48-residue stretch at 502 to 549 (KRRRVSFGGHLRPELFDENLPPNTPLKRGEAPTKRKSLVMHTPPVLKK) folds into the PP1-binding domain. S538 bears the Phosphoserine mark. The residue at position 543 (T543) is a Phosphothreonine. The tract at residues 575 to 632 (SLVISPPAPSPRKTPVASDQRRRSCKTAPASSSKSQTEVPKRGGRKSGNLPSKRVSIS) is disordered. Phosphoserine occurs at positions 579 and 584. The span at 603-612 (PASSSKSQTE) shows a compositional bias: polar residues. S648 carries the phosphoserine modification. A disordered region spans residues 674–707 (TKVIKHGPQRSMNKRQRRPATPKKPVGEVHSQFS). The segment covering 676–694 (VIKHGPQRSMNKRQRRPAT) has biased composition (basic residues). T761 bears the Phosphothreonine mark. The tract at residues 853 to 886 (SLETKTSDTETEPSKTVSTANRSGRSTEFRNIQK) is disordered. Phosphoserine is present on S859. The span at 866 to 882 (SKTVSTANRSGRSTEFR) shows a compositional bias: polar residues. The segment at 1000-2928 (GKITKMPCQS…ASFQELSQTP (1929 aa)) is 16 X 122 AA approximate repeats. K167R repeat units follow at residues 1001–1112 (KITK…FQTP), 1123–1234 (KTTK…FQTP), 1245–1356 (KTTK…FQTP), 1367–1477 (KTTK…FQTP), 1488–1597 (KTTK…LFQT), and 1609–1720 (KTAK…FQTP). T1017 bears the Phosphothreonine mark. Residues K1022 and K1035 each participate in a glycyl lysine isopeptide (Lys-Gly) (interchain with G-Cter in SUMO2) cross-link. Residues 1045–1073 (TRTSGETTHTHREPAGDGKSIRTFKESPK) are disordered. The segment covering 1052-1072 (THTHREPAGDGKSIRTFKESP) has biased composition (basic and acidic residues). Residue S1071 is modified to Phosphoserine. Residue T1091 is modified to Phosphothreonine. K1093 participates in a covalent cross-link: Glycyl lysine isopeptide (Lys-Gly) (interchain with G-Cter in SUMO1); alternate. A Glycyl lysine isopeptide (Lys-Gly) (interchain with G-Cter in SUMO2); alternate cross-link involves residue K1093. S1098 bears the Phosphoserine mark. The interval 1109 to 1151 (FQTPGPSEESMTDEKTTKIACKSPPPESVDTPTSTKQWPKRSL) is disordered. The residue at position 1111 (T1111) is a Phosphothreonine. Position 1131 is a phosphoserine (S1131). Position 1139 is a phosphothreonine (T1139). The residue at position 1142 (S1142) is a Phosphoserine. T1167 bears the Phosphothreonine mark. S1169 carries the post-translational modification Phosphoserine. At T1176 the chain carries Phosphothreonine. Residues K1185 and K1188 each participate in a glycyl lysine isopeptide (Lys-Gly) (interchain with G-Cter in SUMO2) cross-link. A Phosphothreonine modification is found at T1193. The residue at position 1207 (S1207) is a Phosphoserine. Position 1233 is a phosphothreonine (T1233). Positions 1246-1276 (TTKIPCDSPQSDPVDTPTSTKQRPKRSIRKA) are disordered. S1253 and S1256 each carry phosphoserine. Residues 1253 to 1266 (SPQSDPVDTPTSTK) show a composition bias toward polar residues. A phosphothreonine mark is found at T1261, T1298, T1315, and T1327. The segment at 1323–1518 (TENLTGSKRR…PQSKRSLRKV (196 aa)) is disordered. S1329 bears the Phosphoserine mark. At T1335 the chain carries Phosphothreonine. A Glycyl lysine isopeptide (Lys-Gly) (interchain with G-Cter in SUMO2) cross-link involves residue K1337. T1355 carries the phosphothreonine modification. S1376 carries the phosphoserine modification. T1383 is modified (phosphothreonine). S1386 carries the phosphoserine modification. Composition is skewed to basic and acidic residues over residues 1394–1406 (PLEK…ELSA) and 1418–1442 (THTD…KQKL). Phosphothreonine is present on residues T1420 and T1437. S1496 carries the phosphoserine modification. Phosphothreonine is present on T1503. S1506 is modified (phosphoserine). T1540 bears the Phosphothreonine mark. At Y1552 the chain carries Phosphotyrosine. Phosphothreonine occurs at positions 1557 and 1569. Residues S1571 and S1617 each carry the phosphoserine modification. Positions 1597-1675 (TRGHTEESMT…PTGDGKSMKA (79 aa)) are disordered. K1639 carries the N6-acetyllysine modification. K1643 participates in a covalent cross-link: Glycyl lysine isopeptide (Lys-Gly) (interchain with G-Cter in SUMO2). The span at 1660-1672 (THTHTEPTGDGKS) shows a compositional bias: basic and acidic residues. 2 positions are modified to phosphoserine: S1679 and S1689. Disordered regions lie at residues 1689-1708 (SLTG…EVPE), 1717-1765 (FQTP…ADTE), 1771-1790 (FRKQ…PAVG), 1801-1824 (TPVQ…TRKE), and 1839-1886 (FQTP…KADV). Residue K1703 forms a Glycyl lysine isopeptide (Lys-Gly) (interchain with G-Cter in SUMO2) linkage. T1719 carries the phosphothreonine modification. S1721 is modified (phosphoserine). A compositionally biased stretch (basic and acidic residues) spans 1722-1733 (HTKESMTNEKTT). K167R repeat units follow at residues 1731–1842 (KTTK…FQTP), 1854–1964 (TKKI…FQTP), 1975–2086 (KITE…FQTP), 2097–2204 (KTTK…FQTP), and 2215–2326 (KTTK…FQTP). S1740 carries the post-translational modification Phosphoserine. Residues T1747, T1764, T1784, and T1801 each carry the phosphothreonine modification. S1815 carries the phosphoserine modification. T1841 carries the post-translational modification Phosphothreonine. 2 positions are modified to phosphoserine: S1861 and S1864. Polar residues predominate over residues 1861–1874 (SPQSDPADTPTNTK). Phosphothreonine occurs at positions 1869, 1897, 1906, and 1923. S1937 is modified (phosphoserine). The segment at 1961 to 2002 (FQTPGHTEESMTDDKITEVSCKSPQPDPVKTPTSSKQRLKIS) is disordered. T1963 is modified (phosphothreonine). Residues 1966–1977 (HTEESMTDDKIT) show a composition bias toward basic and acidic residues. Residue S1983 is modified to Phosphoserine. K2005 bears the N6-acetyllysine mark. A Glycyl lysine isopeptide (Lys-Gly) (interchain with G-Cter in SUMO1); alternate cross-link involves residue K2009. K2009 is covalently cross-linked (Glycyl lysine isopeptide (Lys-Gly) (interchain with G-Cter in SUMO2); alternate). A disordered region spans residues 2017 to 2192 (KLTQTSGKTT…TPKGKAQPLE (176 aa)). A phosphothreonine mark is found at T2028 and T2065. 2 stretches are compositionally biased toward basic and acidic residues: residues 2028–2046 (THRE…KESA) and 2061–2070 (RWPRTPKEEA). K2067 is covalently cross-linked (Glycyl lysine isopeptide (Lys-Gly) (interchain with G-Cter in SUMO1); alternate). A Glycyl lysine isopeptide (Lys-Gly) (interchain with G-Cter in SUMO2); alternate cross-link involves residue K2067. Position 2072 is a phosphoserine (S2072). T2085 bears the Phosphothreonine mark. Positions 2087-2099 (DHTEESTTDDKTT) are enriched in basic and acidic residues. Residue S2105 is modified to Phosphoserine. The residue at position 2113 (T2113) is a Phosphothreonine. S2116 and S2135 each carry phosphoserine. The segment covering 2145 to 2168 (HTDKVPGDEDKGINVFRETAKQKL) has biased composition (basic and acidic residues). T2146, T2163, and T2203 each carry phosphothreonine. Positions 2205-2400 (ICTDKPTTHE…KPAVSDEKNI (196 aa)) are disordered. S2223 carries the post-translational modification Phosphoserine. Residues T2231 and T2233 each carry the phosphothreonine modification. Position 2239 is a phosphoserine (S2239). T2259 bears the Phosphothreonine mark. S2261 is modified (phosphoserine). T2268, T2285, T2325, T2328, and T2333 each carry phosphothreonine. K167R repeat units follow at residues 2336-2447 (KTTK…FQTP), 2458-2569 (KITE…FSAP), 2580-2688 (KNTK…LSET), 2700-2805 (KATK…GFKD), and 2819-2928 (KTTK…SQTP). S2344 carries the post-translational modification Phosphoserine. 2 positions are modified to phosphothreonine: T2352 and T2389. Residue S2395 is modified to Phosphoserine. Phosphothreonine is present on T2406. S2420 is modified (phosphoserine). T2426 and T2446 each carry phosphothreonine. Residues 2445 to 2480 (QTPGHTEESMTDDKITEVSCKSPQPESFKTSRSSKQ) are disordered. The span at 2449–2460 (HTEESMTDDKIT) shows a compositional bias: basic and acidic residues. Positions 2463–2475 (SCKSPQPESFKTS) are enriched in polar residues. A Phosphoserine modification is found at S2466. K2492 participates in a covalent cross-link: Glycyl lysine isopeptide (Lys-Gly) (interchain with G-Cter in SUMO1). Residues 2497 to 2521 (AVSKLTRTSGETTQTHTEPTGDSKS) form a disordered region. A compositionally biased stretch (polar residues) spans 2501-2514 (LTRTSGETTQTHTE). Phosphoserine occurs at positions 2505, 2528, and 2588. Residues 2570 to 3256 (GHTEESMTID…TRSHRDSEDI (687 aa)) are disordered. 3 stretches are compositionally biased toward basic and acidic residues: residues 2609 to 2618 (RKEVKEELSA), 2632 to 2644 (THKE…EGIK), and 2660 to 2675 (EPSR…KAQP). Residue K2613 forms a Glycyl lysine isopeptide (Lys-Gly) (interchain with G-Cter in SUMO1); alternate linkage. K2613 participates in a covalent cross-link: Glycyl lysine isopeptide (Lys-Gly) (interchain with G-Cter in SUMO2); alternate. At S2638 the chain carries Phosphoserine. A compositionally biased stretch (polar residues) spans 2685–2696 (LSETSGHTQESL). Phosphoserine is present on S2708. K2734 is covalently cross-linked (Glycyl lysine isopeptide (Lys-Gly) (interchain with G-Cter in SUMO1); alternate). A Glycyl lysine isopeptide (Lys-Gly) (interchain with G-Cter in SUMO2); alternate cross-link involves residue K2734. Basic and acidic residues-rich tracts occupy residues 2751–2770 (DADK…KESA) and 2810–2821 (HTEESMTDDKTT). A phosphoserine mark is found at S2827, S2828, and S2838. K2852 is covalently cross-linked (Glycyl lysine isopeptide (Lys-Gly) (interchain with G-Cter in SUMO1); alternate). Residue K2852 forms a Glycyl lysine isopeptide (Lys-Gly) (interchain with G-Cter in SUMO2); alternate linkage. Residues 2869 to 2881 (THTDKEPVGEGKG) are compositionally biased toward basic and acidic residues. The segment covering 2941–2951 (SFTSAPKQTPD) has biased composition (polar residues). A Glycyl lysine isopeptide (Lys-Gly) (interchain with G-Cter in SUMO2) cross-link involves residue K2967. Positions 2982-2991 (KSQSKSNTSL) are enriched in polar residues. Residue K2986 is modified to N6-acetyllysine. Basic residues predominate over residues 3029 to 3039 (KKQRVAPRARG). ATP is bound at residue 3034 to 3041 (APRARGKS). At S3041 the chain carries Phosphoserine. Composition is skewed to basic and acidic residues over residues 3071–3080 (KTNKEEHKLQ) and 3113–3124 (ERIEINRNEKKP). Residue S3128 is modified to Phosphoserine. Residues 3138–3154 (DGARKPIPRDKVTENKR) are compositionally biased toward basic and acidic residues. Residues 3207–3223 (SQPAASTLESKSVQRVT) show a composition bias toward polar residues. The span at 3228–3241 (RCAENPKKAEDNVC) shows a compositional bias: basic and acidic residues.

In terms of assembly, interacts with KIF15. Interacts (via the FHA domain) with NIFK. Interacts with PPP1CC. Component of a complex at least composed of ZNF335, HCFC1, CCAR2, EMSY, MKI67, RBBP5, ASH2L and WDR5; the complex is formed as a result of interactions between components of a nuclear receptor-mediated transcription complex and a histone methylation complex. Interacts with ZNF335. Hyperphosphorylated by CDK1 in mitosis; hyperphosphorylatiom prevents undergoing liquid-liquid phase separation. Dephosphorylated by PPP1CC at the onset of anaphase. Dephosphorylated by protein phosphatase 2A (PP2A) at the onset of anaphase. Dephosphorylation by protein phosphatase 2A (PP2A) and simultaneous exposure of the positively charged patch (CP) during mitotic exit induce the RNA-dependent formation of a liquid-like condensed phase on the chromosome surface. Post-translationally, ubiquitinated by the APC/C complex after neuronal progenitors exit mitosis during brain development, leading to clearance from constitutive heterochromatin.

It localises to the chromosome. The protein resides in the nucleus. It is found in the nucleolus. In terms of biological role, protein that associates with the surface of mitotic chromosomes and acts both as a chromosome repellent during early mitosis and chromosome attractant during late mitosis. Required to maintain individual mitotic chromosomes dispersed in the cytoplasm following nuclear envelope disassembly. During early mitosis, relocalizes from nucleoli to the chromosome surface where it forms extended brush structures that cover a substantial fraction of the chromosome surface. The MKI67 brush structure prevents chromosomes from collapsing into a single chromatin mass by forming a steric and electrostatic charge barrier: the protein has a high net electrical charge and acts as a surfactant, dispersing chromosomes and enabling independent chromosome motility. During mitotic anaphase, the MKI67 brush structure collapses and MKI67 switches from a chromosome repellent to a chromosome attractant to promote chromosome clustering and facilitate the exclusion of large cytoplasmic particles from the future nuclear space. Mechanistically, dephosphorylation during mitotic exit and simultaneous exposure of a conserved basic patch induce the RNA-dependent formation of a liquid-like condensed phase on the chromosome surface, promoting coalescence of neighboring chromosome surfaces and clustering of chromosomes. Binds premature ribosomal RNAs during anaphase; promoting liquid-liquid phase separation. Binds DNA, with a preference for supercoiled DNA and AT-rich DNA. Does not contribute to the internal structure of mitotic chromosomes. May play a role in chromatin organization; it is however unclear whether it plays a direct role in chromatin organization or whether it is an indirect consequence of its function in mitotic chromosome. The protein is Proliferation marker protein Ki-67 of Homo sapiens (Human).